We begin with the raw amino-acid sequence, 443 residues long: Protein king tubby (443 aa).

2 disordered regions span residues 57-80 (TNGS…NNMR) and 98-191 (HELE…EGDV). Residues 68-80 (AMNTSRNHSNNMR) are compositionally biased toward polar residues. Residues 113–128 (QHQQSASHSANSTQSQ) are compositionally biased toward low complexity. A Phosphoserine modification is found at Ser136. Residues 177 to 186 (NGTGNGTGGE) are compositionally biased toward gly residues.

It belongs to the TUB family.

Its subcellular location is the cytoplasm. The protein localises to the nucleus. It localises to the cell projection. It is found in the cilium membrane. The protein resides in the rhabdomere. The polypeptide is Protein king tubby (Drosophila simulans (Fruit fly)).